Consider the following 358-residue polypeptide: Methylthioribose-1-phosphate isomerase (358 aa).

Substrate-binding positions include 54 to 56 (RGA), arginine 96, and glutamine 205. Catalysis depends on aspartate 246, which acts as the Proton donor. 256 to 257 (NK) is a substrate binding site.

Belongs to the eIF-2B alpha/beta/delta subunits family. MtnA subfamily.

The catalysed reaction is 5-(methylsulfanyl)-alpha-D-ribose 1-phosphate = 5-(methylsulfanyl)-D-ribulose 1-phosphate. The protein operates within amino-acid biosynthesis; L-methionine biosynthesis via salvage pathway; L-methionine from S-methyl-5-thio-alpha-D-ribose 1-phosphate: step 1/6. Its function is as follows. Catalyzes the interconversion of methylthioribose-1-phosphate (MTR-1-P) into methylthioribulose-1-phosphate (MTRu-1-P). This chain is Methylthioribose-1-phosphate isomerase, found in Pseudomonas syringae pv. syringae (strain B728a).